The primary structure comprises 53 residues: MGVQISPYTNPVLFWGVFEVRGTSKGVGVILTRFFLEIFMILVFVGFETRCLW.

It localises to the mitochondrion matrix. Its subcellular location is the kinetoplast. This is an uncharacterized protein from Trypanosoma brucei brucei.